Consider the following 625-residue polypeptide: Coagulation factor XI (625 aa).

The first 18 residues, 1–18 (MIFLYQVVHFILFTSVSG), serve as a signal peptide directing secretion. Apple domains are found at residues 20-103 (CVTQ…FKQC), 110-193 (CNKD…LKSC), 200-283 (CIRD…LQSC), and 291-374 (CHSS…LRLC). 17 cysteine pairs are disulfide-bonded: Cys-20/Cys-103, Cys-46/Cys-76, Cys-50/Cys-56, Cys-110/Cys-193, Cys-136/Cys-165, Cys-140/Cys-146, Cys-200/Cys-283, Cys-226/Cys-255, Cys-230/Cys-236, Cys-291/Cys-374, Cys-317/Cys-346, Cys-321/Cys-327, Cys-380/Cys-500, Cys-416/Cys-432, Cys-514/Cys-581, Cys-545/Cys-560, and Cys-571/Cys-599. N-linked (GlcNAc...) (complex) asparagine glycosylation is found at Asn-90 and Asn-126. N-linked (GlcNAc...) (complex) asparagine; atypical glycosylation occurs at Asn-163. Residues 388–623 (IVGGTASVRG…YVDWILEKTQ (236 aa)) form the Peptidase S1 domain. His-431 acts as the Charge relay system in catalysis. Residue Asn-450 is glycosylated (N-linked (GlcNAc...) (complex) asparagine). Asp-480 (charge relay system) is an active-site residue. Asn-491 carries an N-linked (GlcNAc...) (complex) asparagine glycan. Heparin is bound at residue 547–550 (KRYR). The active-site Charge relay system is the Ser-575.

It belongs to the peptidase S1 family. Plasma kallikrein subfamily. In terms of assembly, homodimer; disulfide-linked. Can form non-covalently bonded homodimers. After activation the heavy and light chains are also linked by a disulfide bond. Interacts (activated) with F9 (inactive and activated) in calcium-dependent manner. Forms a heterodimer with SERPINA5. Interacts with Anopheles gambiae D7L2. Interacts (activated) with guianensin, an anticoagulant protein from Simulium guianense saliva. Post-translationally, N-glycosylated on both chains. N-glycosylated sites mainly consist of nonfucosylated sialylated biantennary (in high abundance) and/or triantennary (in low abundance) complex structures. Glycosylation at Asn-163 uses a rare non-canonical Asn-X-Cys glycosite. Activated by factor XIIa (or XII), which cleaves each polypeptide after Arg-387 into the light chain, which contains the active site, and the heavy chain, which associates with high molecular weight (HMW) kininogen. Activated by F12 (activated); the presence of negatively charged surfaces accelerates activation. Activated by F2 (thrombin); the presence of negatively charged surfaces, such as polyphosphate and dextran sulfate, strongly accelerates activation. Autoactivated; the presence of negatively charged surfaces, such as polyphosphate and dextran sulfate, accelerates autoactivation and autolysis. As to expression, isoform 2 is produced by platelets and megakaryocytes but absent from other blood cells.

The protein resides in the secreted. It carries out the reaction Selective cleavage of Arg-|-Ala and Arg-|-Val bonds in factor IX to form factor IXa.. Its activity is regulated as follows. Inhibited by SERPINA5. Its function is as follows. Factor XI triggers the middle phase of the intrinsic pathway of blood coagulation by activating factor IX. The sequence is that of Coagulation factor XI (F11) from Homo sapiens (Human).